The chain runs to 510 residues: ATP synthase subunit alpha (510 aa).

Gly-169–Thr-176 lines the ATP pocket.

The protein belongs to the ATPase alpha/beta chains family. F-type ATPases have 2 components, CF(1) - the catalytic core - and CF(0) - the membrane proton channel. CF(1) has five subunits: alpha(3), beta(3), gamma(1), delta(1), epsilon(1). CF(0) has three main subunits: a(1), b(2) and c(9-12). The alpha and beta chains form an alternating ring which encloses part of the gamma chain. CF(1) is attached to CF(0) by a central stalk formed by the gamma and epsilon chains, while a peripheral stalk is formed by the delta and b chains.

Its subcellular location is the cell inner membrane. The enzyme catalyses ATP + H2O + 4 H(+)(in) = ADP + phosphate + 5 H(+)(out). In terms of biological role, produces ATP from ADP in the presence of a proton gradient across the membrane. The alpha chain is a regulatory subunit. The chain is ATP synthase subunit alpha from Afipia carboxidovorans (strain ATCC 49405 / DSM 1227 / KCTC 32145 / OM5) (Oligotropha carboxidovorans).